The primary structure comprises 169 residues: MTIQTLFAASHHIYLGNAIWYLLCFAILMLLIKHYAWGPVSDMMEKRRQKIISDLDSAASDRKKAETLANEREAALKNSRQEATQILSDAKTNAQNTSKEIVASANEDAAAIRKKANEEAAKAKSDALDAARDQVADISVAIAEKVIAKNLSAEDQKDLVDQFIKGLDD.

A helical transmembrane segment spans residues 12-32; that stretch reads HIYLGNAIWYLLCFAILMLLI.

This sequence belongs to the ATPase B chain family. As to quaternary structure, F-type ATPases have 2 components, F(1) - the catalytic core - and F(0) - the membrane proton channel. F(1) has five subunits: alpha(3), beta(3), gamma(1), delta(1), epsilon(1). F(0) has three main subunits: a(1), b(2) and c(10-14). The alpha and beta chains form an alternating ring which encloses part of the gamma chain. F(1) is attached to F(0) by a central stalk formed by the gamma and epsilon chains, while a peripheral stalk is formed by the delta and b chains.

The protein localises to the cell membrane. Increases 2-fold following exposure to low pH. F(1)F(0) ATP synthase produces ATP from ADP in the presence of a proton or sodium gradient. F-type ATPases consist of two structural domains, F(1) containing the extramembraneous catalytic core and F(0) containing the membrane proton channel, linked together by a central stalk and a peripheral stalk. During catalysis, ATP synthesis in the catalytic domain of F(1) is coupled via a rotary mechanism of the central stalk subunits to proton translocation. In terms of biological role, component of the F(0) channel, it forms part of the peripheral stalk, linking F(1) to F(0). The polypeptide is ATP synthase subunit b (Lactobacillus acidophilus (strain ATCC 700396 / NCK56 / N2 / NCFM)).